We begin with the raw amino-acid sequence, 129 residues long: Protein Turandot A2 (129 aa).

The N-terminal stretch at 1 to 21 is a signal peptide; that stretch reads MNSSTSLMCFALLLISPLCMG. A glycan (N-linked (GlcNAc...) asparagine) is linked at N49.

The protein belongs to the Turandot family.

The protein localises to the secreted. Its function is as follows. A humoral factor that plays a role in stress tolerance; gives increased resistance to the lethal effects of bacterial challenge and stress. Regulated by the JAK/STAT pathway and NF-KB-like Relish pathway in the fat body, upd3 in the hemocytes and Mekk1 in response to septic injury and consequent immune response. This is Protein Turandot A2 (TotA2) from Drosophila simulans (Fruit fly).